The sequence spans 174 residues: Large ribosomal subunit protein uL10 (174 aa).

This sequence belongs to the universal ribosomal protein uL10 family. In terms of assembly, part of the ribosomal stalk of the 50S ribosomal subunit. The N-terminus interacts with L11 and the large rRNA to form the base of the stalk. The C-terminus forms an elongated spine to which L12 dimers bind in a sequential fashion forming a multimeric L10(L12)X complex.

Its function is as follows. Forms part of the ribosomal stalk, playing a central role in the interaction of the ribosome with GTP-bound translation factors. This chain is Large ribosomal subunit protein uL10, found in Bordetella petrii (strain ATCC BAA-461 / DSM 12804 / CCUG 43448).